Reading from the N-terminus, the 126-residue chain is Class I hydrophobin 1 (126 aa).

An N-terminal signal peptide occupies residues 1–16 (MQYMTIVAFLAATVAA). 4 disulfides stabilise this stretch: cysteine 38–cysteine 100, cysteine 46–cysteine 94, cysteine 47–cysteine 75, and cysteine 101–cysteine 119.

The protein belongs to the fungal hydrophobin family.

It localises to the secreted. Its subcellular location is the cell wall. In terms of biological role, aerial growth, conidiation, and dispersal of filamentous fungi in the environment rely upon a capability of their secreting small amphipathic proteins called hydrophobins (HPBs) with low sequence identity. Class I can self-assemble into an outermost layer of rodlet bundles on aerial cell surfaces, conferring cellular hydrophobicity that supports fungal growth, development and dispersal; whereas Class II form highly ordered films at water-air interfaces through intermolecular interactions but contribute nothing to the rodlet structure. HYD1 and HYD2 are required for the structural integrity of the long aerial chains of microconidia. Does not seem to be important for the ability to cause seedling disease. The sequence is that of Class I hydrophobin 1 from Gibberella moniliformis (Maize ear and stalk rot fungus).